Consider the following 539-residue polypeptide: uncharacterized protein (539 aa).

Disordered stretches follow at residues 179 to 203 and 433 to 459; these read SDEL…HSHG and AQAS…HRDE. The segment covering 182 to 192 has biased composition (acidic residues); the sequence is LLPDTGEDSDE. A compositionally biased stretch (low complexity) spans 433–442; the sequence is AQASARAQAR. The segment covering 443-455 has biased composition (basic residues); it reads AARRGRSAAKARG.

Belongs to the mycobacterial PPE family.

The protein localises to the secreted. This is an uncharacterized protein from Mycobacterium tuberculosis (strain CDC 1551 / Oshkosh).